The sequence spans 211 residues: ATP phosphoribosyltransferase (211 aa).

Belongs to the ATP phosphoribosyltransferase family. Short subfamily. In terms of assembly, heteromultimer composed of HisG and HisZ subunits.

It localises to the cytoplasm. It catalyses the reaction 1-(5-phospho-beta-D-ribosyl)-ATP + diphosphate = 5-phospho-alpha-D-ribose 1-diphosphate + ATP. It functions in the pathway amino-acid biosynthesis; L-histidine biosynthesis; L-histidine from 5-phospho-alpha-D-ribose 1-diphosphate: step 1/9. In terms of biological role, catalyzes the condensation of ATP and 5-phosphoribose 1-diphosphate to form N'-(5'-phosphoribosyl)-ATP (PR-ATP). Has a crucial role in the pathway because the rate of histidine biosynthesis seems to be controlled primarily by regulation of HisG enzymatic activity. This Pseudomonas aeruginosa (strain UCBPP-PA14) protein is ATP phosphoribosyltransferase.